The sequence spans 91 residues: Dynein 8 kDa light chain, flagellar outer arm (91 aa).

It belongs to the dynein light chain family. In terms of assembly, consists of at least 3 heavy chains (alpha, beta and gamma), 2 intermediate chains and 8 light chains.

It is found in the cytoplasm. It localises to the cytoskeleton. The protein resides in the flagellum axoneme. This Chlamydomonas reinhardtii (Chlamydomonas smithii) protein is Dynein 8 kDa light chain, flagellar outer arm.